The sequence spans 307 residues: Probable 2-methylisocitrate lyase 2 (307 aa).

53–55 (SGA) contributes to the substrate binding site. Positions 92 and 94 each coordinate Mg(2+). Residues 129-130 (CG), R164, E194, 216-218 (NMT), R247, and R276 each bind substrate.

The protein belongs to the isocitrate lyase/PEP mutase superfamily. Methylisocitrate lyase family. In terms of assembly, homotetramer; dimer of dimers. Mg(2+) is required as a cofactor.

It catalyses the reaction (2S,3R)-3-hydroxybutane-1,2,3-tricarboxylate = pyruvate + succinate. Its pathway is organic acid metabolism; propanoate degradation. In terms of biological role, involved in the catabolism of short chain fatty acids (SCFA) via the 2-methylcitrate cycle I (propionate degradation route). Catalyzes the thermodynamically favored C-C bond cleavage of (2R,3S)-2-methylisocitrate to yield pyruvate and succinate via an alpha-carboxy-carbanion intermediate. This chain is Probable 2-methylisocitrate lyase 2, found in Corynebacterium glutamicum (strain ATCC 13032 / DSM 20300 / JCM 1318 / BCRC 11384 / CCUG 27702 / LMG 3730 / NBRC 12168 / NCIMB 10025 / NRRL B-2784 / 534).